Consider the following 381-residue polypeptide: Chymosin (381 aa).

An N-terminal signal peptide occupies residues 1-16; that stretch reads MRGFVVLLAVFALSQA. A propeptide spans 17–58 (activation peptide); it reads SGIVRIPLHKGKSLRRALKERGLLEDFLKNHQHAVSRKHSNS. The Peptidase A1 domain occupies 74 to 378; that stretch reads YFGKIYIGTP…DRASNLVGLA (305 aa). Residue aspartate 92 is part of the active site. The stretch at 92-102 is repeat 1; the sequence is DTGSSDLWVPS. Disulfide bonds link cysteine 105–cysteine 110 and cysteine 265–cysteine 269. Residue aspartate 274 is part of the active site. Repeat 2 spans residues 274–284; sequence DTGTSMLVGPG. An intrachain disulfide couples cysteine 308 to cysteine 341.

Belongs to the peptidase A1 family. In terms of assembly, monomer.

The catalysed reaction is Broad specificity similar to that of pepsin A. Clots milk by cleavage of a single 104-Ser-Phe-|-Met-Ala-107 bond in kappa-chain of casein.. With respect to regulation, inhibited by pepstatin. In terms of biological role, hydrolyzes a variety of proteins. In Callithrix jacchus (White-tufted-ear marmoset), this protein is Chymosin (CYM).